Consider the following 350-residue polypeptide: Holliday junction branch migration complex subunit RuvB (350 aa).

The tract at residues 4-184 (ADRIVTASSR…FGIVQRLEFY (181 aa)) is large ATPase domain (RuvB-L). ATP-binding positions include isoleucine 23, arginine 24, glycine 65, lysine 68, threonine 69, threonine 70, 131–133 (EDF), arginine 174, tyrosine 184, and arginine 221. Threonine 69 lines the Mg(2+) pocket. The tract at residues 185–255 (STEDLATIVR…IADLALNMLD (71 aa)) is small ATPAse domain (RuvB-S). A head domain (RuvB-H) region spans residues 258-350 (ERGFDHQDRR…TPDLFEGDIV (93 aa)). Residues arginine 294, arginine 313, and arginine 318 each contribute to the DNA site.

Belongs to the RuvB family. Homohexamer. Forms an RuvA(8)-RuvB(12)-Holliday junction (HJ) complex. HJ DNA is sandwiched between 2 RuvA tetramers; dsDNA enters through RuvA and exits via RuvB. An RuvB hexamer assembles on each DNA strand where it exits the tetramer. Each RuvB hexamer is contacted by two RuvA subunits (via domain III) on 2 adjacent RuvB subunits; this complex drives branch migration. In the full resolvosome a probable DNA-RuvA(4)-RuvB(12)-RuvC(2) complex forms which resolves the HJ.

It localises to the cytoplasm. It catalyses the reaction ATP + H2O = ADP + phosphate + H(+). Its function is as follows. The RuvA-RuvB-RuvC complex processes Holliday junction (HJ) DNA during genetic recombination and DNA repair, while the RuvA-RuvB complex plays an important role in the rescue of blocked DNA replication forks via replication fork reversal (RFR). RuvA specifically binds to HJ cruciform DNA, conferring on it an open structure. The RuvB hexamer acts as an ATP-dependent pump, pulling dsDNA into and through the RuvAB complex. RuvB forms 2 homohexamers on either side of HJ DNA bound by 1 or 2 RuvA tetramers; 4 subunits per hexamer contact DNA at a time. Coordinated motions by a converter formed by DNA-disengaged RuvB subunits stimulates ATP hydrolysis and nucleotide exchange. Immobilization of the converter enables RuvB to convert the ATP-contained energy into a lever motion, pulling 2 nucleotides of DNA out of the RuvA tetramer per ATP hydrolyzed, thus driving DNA branch migration. The RuvB motors rotate together with the DNA substrate, which together with the progressing nucleotide cycle form the mechanistic basis for DNA recombination by continuous HJ branch migration. Branch migration allows RuvC to scan DNA until it finds its consensus sequence, where it cleaves and resolves cruciform DNA. This is Holliday junction branch migration complex subunit RuvB from Stutzerimonas stutzeri (strain A1501) (Pseudomonas stutzeri).